The primary structure comprises 841 residues: Translation initiation factor IF-2 (841 aa).

Basic and acidic residues-rich tracts occupy residues M1 to K12, A52 to K92, E114 to A170, R188 to R202, and K213 to G235. Disordered stretches follow at residues M1–V24 and A52–L246. In terms of domain architecture, tr-type G spans T340 to T510. A G1 region spans residues G349–T356. A GTP-binding site is contributed by G349–T356. Residues G374–H378 are G2. A G3 region spans residues D396 to G399. Residues D396–H400 and N450–D453 contribute to the GTP site. Residues N450 to D453 are G4. Residues S486–K488 form a G5 region.

The protein belongs to the TRAFAC class translation factor GTPase superfamily. Classic translation factor GTPase family. IF-2 subfamily.

The protein localises to the cytoplasm. One of the essential components for the initiation of protein synthesis. Protects formylmethionyl-tRNA from spontaneous hydrolysis and promotes its binding to the 30S ribosomal subunits. Also involved in the hydrolysis of GTP during the formation of the 70S ribosomal complex. The sequence is that of Translation initiation factor IF-2 from Actinobacillus pleuropneumoniae serotype 5b (strain L20).